The following is a 630-amino-acid chain: Differentially expressed in FDCP 6 (630 aa).

Y210 is subject to Phosphotyrosine. The 97-residue stretch at 216-312 (DVLKQGYLWK…WTAAIQTAIR (97 aa)) folds into the PH domain. K225 bears the N6-acetyllysine mark. 3 disordered regions span residues 318–341 (KTSLHKDLKQKRREQREQRERRRA), 378–418 (LQEE…ELKK), and 552–630 (HPIE…APGN). Composition is skewed to basic and acidic residues over residues 331 to 341 (EQREQRERRRA) and 378 to 392 (LQEEEERRRSQHKEL). Residues 588-606 (WGSQGNRTLSVNSSEQKSL) are compositionally biased toward polar residues. A Phosphoserine modification is found at S590. A compositionally biased stretch (basic and acidic residues) spans 620-630 (QEEKLDPAPGN).

As to quaternary structure, interacts with IRF4, activated RAC1 and F-actin. Both the phosphorylated and non-phosphorylated forms bind phosphatidylinositol 3,4,5-trisphosphate (PtdInsP3). Interacts with ZAP70. Interacts with RAB11A. Post-translationally, tyrosine-phosphorylated by tyrosine-protein kinase LCK in response to T-cell activation. In terms of tissue distribution, thymus.

It is found in the cytoplasm. Its subcellular location is the cell membrane. The protein localises to the nucleus. It localises to the cytoskeleton. The protein resides in the perinuclear region. It is found in the cell projection. Its subcellular location is the filopodium. Functionally, phosphatidylinositol 3,4,5-trisphosphate-dependent guanine nucleotide exchange factor (GEF) which plays a role in the activation of Rho GTPases RAC1, RhoA and CDC42. Can regulate cell morphology in cooperation with activated RAC1. Involved in immune homeostasis by ensuring proper trafficking and availability of T-cell regulator CTLA-4 at T-cell surface. Plays a role in Th2 (T helper cells) development and/or activation, perhaps by interfering with ZAP70 signaling. Required for optimal T-cell effector function, lymphocyte homeostasis and the prevention of systemic autoimmunity. In Mus musculus (Mouse), this protein is Differentially expressed in FDCP 6 (Def6).